We begin with the raw amino-acid sequence, 265 residues long: Ribosomal RNA small subunit methyltransferase A (265 aa).

Histidine 13, leucine 15, glycine 40, glutamate 62, aspartate 87, and asparagine 106 together coordinate S-adenosyl-L-methionine.

It belongs to the class I-like SAM-binding methyltransferase superfamily. rRNA adenine N(6)-methyltransferase family. RsmA subfamily.

The protein localises to the cytoplasm. The catalysed reaction is adenosine(1518)/adenosine(1519) in 16S rRNA + 4 S-adenosyl-L-methionine = N(6)-dimethyladenosine(1518)/N(6)-dimethyladenosine(1519) in 16S rRNA + 4 S-adenosyl-L-homocysteine + 4 H(+). Specifically dimethylates two adjacent adenosines (A1518 and A1519) in the loop of a conserved hairpin near the 3'-end of 16S rRNA in the 30S particle. May play a critical role in biogenesis of 30S subunits. The chain is Ribosomal RNA small subunit methyltransferase A from Persephonella marina (strain DSM 14350 / EX-H1).